We begin with the raw amino-acid sequence, 407 residues long: RING-H2 finger protein ATL43 (407 aa).

The N-terminal stretch at 1–22 (MSSSSLILLFSTLSLFLNVSLA) is a signal peptide. The chain crosses the membrane as a helical span at residues 57–77 (GIAVVIAVLTAFFSLTFLLLL). An RING-type; atypical zinc finger spans residues 146–188 (CAVCLARFEPTEVLRLLPKCKHAFHVECVDTWLDAHSTCPLCR).

It belongs to the RING-type zinc finger family. ATL subfamily.

The protein resides in the membrane. The enzyme catalyses S-ubiquitinyl-[E2 ubiquitin-conjugating enzyme]-L-cysteine + [acceptor protein]-L-lysine = [E2 ubiquitin-conjugating enzyme]-L-cysteine + N(6)-ubiquitinyl-[acceptor protein]-L-lysine.. Its pathway is protein modification; protein ubiquitination. The protein is RING-H2 finger protein ATL43 (ATL43) of Arabidopsis thaliana (Mouse-ear cress).